Consider the following 539-residue polypeptide: Alpha-aminoadipic semialdehyde dehydrogenase (539 aa).

The N-terminal 26 residues, 1–26, are a transit peptide targeting the mitochondrion; sequence MWRVPGLLCVRVARKSKFSGSWNRPA. An N6-acetyllysine; alternate modification is found at Lys94. Residue Lys94 is modified to N6-succinyllysine; alternate. NAD(+) contacts are provided by residues 192-194, Lys218, 258-259, 274-275, 274-279, and 296-297; these read TAF, GT, GS, GSTQVG, and EL. Glu296 serves as the catalytic Proton acceptor. The active-site Nucleophile is the Cys330. Thr331 is a (S)-2-amino-6-oxohexanoate binding site. Residue Glu427 coordinates NAD(+). Lys462 bears the N6-acetyllysine mark. Gly489 and Ala490 together coordinate (S)-2-amino-6-oxohexanoate. Lys500 carries the N6-acetyllysine modification. Residue Lys537 is modified to N6-succinyllysine.

The protein belongs to the aldehyde dehydrogenase family. In terms of assembly, homotetramer.

It is found in the cytoplasm. The protein localises to the cytosol. It localises to the nucleus. Its subcellular location is the mitochondrion. It carries out the reaction nonanal + NAD(+) + H2O = nonanoate + NADH + 2 H(+). It catalyses the reaction (S)-2-amino-6-oxohexanoate + NAD(+) + H2O = L-2-aminoadipate + NADH + 2 H(+). The enzyme catalyses betaine aldehyde + NAD(+) + H2O = glycine betaine + NADH + 2 H(+). The catalysed reaction is an aldehyde + NAD(+) + H2O = a carboxylate + NADH + 2 H(+). It carries out the reaction hexanal + NAD(+) + H2O = hexanoate + NADH + 2 H(+). It catalyses the reaction octanal + NAD(+) + H2O = octanoate + NADH + 2 H(+). The enzyme catalyses (E)-non-2-enal + NAD(+) + H2O = (E)-non-2-enoate + NADH + 2 H(+). The catalysed reaction is (E)-4-hydroxynon-2-enal + NAD(+) + H2O = (E)-4-hydroxynon-2-enoate + NADH + 2 H(+). Its pathway is amine and polyamine biosynthesis; betaine biosynthesis via choline pathway; betaine from betaine aldehyde: step 1/1. Its function is as follows. Multifunctional enzyme mediating important protective effects. Metabolizes betaine aldehyde to betaine, an important cellular osmolyte and methyl donor. Protects cells from oxidative stress by metabolizing a number of lipid peroxidation-derived aldehydes. Involved in lysine catabolism. This is Alpha-aminoadipic semialdehyde dehydrogenase (ALDH7A1) from Bos taurus (Bovine).